A 356-amino-acid chain; its full sequence is UDP-N-acetylglucosamine--N-acetylmuramyl-(pentapeptide) pyrophosphoryl-undecaprenol N-acetylglucosamine transferase (356 aa).

The UDP-N-acetyl-alpha-D-glucosamine site is built by Ser-195 and Gln-287.

The protein belongs to the glycosyltransferase 28 family. MurG subfamily.

Its subcellular location is the cell membrane. It carries out the reaction Mur2Ac(oyl-L-Ala-gamma-D-Glu-L-Lys-D-Ala-D-Ala)-di-trans,octa-cis-undecaprenyl diphosphate + UDP-N-acetyl-alpha-D-glucosamine = beta-D-GlcNAc-(1-&gt;4)-Mur2Ac(oyl-L-Ala-gamma-D-Glu-L-Lys-D-Ala-D-Ala)-di-trans,octa-cis-undecaprenyl diphosphate + UDP + H(+). It participates in cell wall biogenesis; peptidoglycan biosynthesis. Cell wall formation. Catalyzes the transfer of a GlcNAc subunit on undecaprenyl-pyrophosphoryl-MurNAc-pentapeptide (lipid intermediate I) to form undecaprenyl-pyrophosphoryl-MurNAc-(pentapeptide)GlcNAc (lipid intermediate II). The protein is UDP-N-acetylglucosamine--N-acetylmuramyl-(pentapeptide) pyrophosphoryl-undecaprenol N-acetylglucosamine transferase of Streptococcus gordonii (strain Challis / ATCC 35105 / BCRC 15272 / CH1 / DL1 / V288).